Consider the following 505-residue polypeptide: ATP synthase subunit alpha, chloroplastic (505 aa).

Residue 170–177 coordinates ATP; it reads GDRQTGKT.

This sequence belongs to the ATPase alpha/beta chains family. As to quaternary structure, F-type ATPases have 2 components, CF(1) - the catalytic core - and CF(0) - the membrane proton channel. CF(1) has five subunits: alpha(3), beta(3), gamma(1), delta(1), epsilon(1). CF(0) has four main subunits: a, b, b' and c.

Its subcellular location is the plastid. It localises to the chloroplast thylakoid membrane. It carries out the reaction ATP + H2O + 4 H(+)(in) = ADP + phosphate + 5 H(+)(out). In terms of biological role, produces ATP from ADP in the presence of a proton gradient across the membrane. The alpha chain is a regulatory subunit. The polypeptide is ATP synthase subunit alpha, chloroplastic (Mesostigma viride (Green alga)).